Consider the following 1136-residue polypeptide: DNA-directed RNA polymerase I subunit RPA2 (1136 aa).

The interval 1–24 (MDPGSRWRNLPSGPSLKHLTDPSY) is disordered. Residue arginine 180 coordinates RNA. Positions 194 to 208 (VRPKWKTRGPGYTHY) are loop B. A loop A region spans residues 236-247 (LNFIYRKELFFL). Residue aspartate 367 coordinates RNA. Fork loop regions lie at residues 439–453 (LRSK…DSGL) and 474–489 (RGAD…VRRL). Lysine 890 contributes to the RNA binding site. Arginine 1020 and arginine 1036 together coordinate DNA. At serine 1051 the chain carries Phosphoserine. Zn(2+)-binding residues include cysteine 1071, cysteine 1074, cysteine 1099, and cysteine 1102. The C4-type zinc finger occupies 1071–1102 (CVKCGSLLSPLLEKPPPSWSAMRNRKYNCTLC).

It belongs to the RNA polymerase beta chain family. Component of the RNA polymerase I (Pol I) complex consisting of 13 subunits: a ten-subunit catalytic core composed of POLR1A/RPA1, POLR1B/RPA2, POLR1C/RPAC1, POLR1D/RPAC2, POLR1H/RPA12, POLR2E/RPABC1, POLR2F/RPABC2, POLR2H/RPABC3, POLR2K/RPABC4 and POLR2L/RPABC5; a mobile stalk subunit POLR1F/RPA43 protruding from the core and additional subunits homologous to general transcription factors POLR1E/RPA49 and POLR1G/RPA34. Part of Pol I pre-initiation complex (PIC), in which Pol I core assembles with RRN3 and promoter-bound UTBF and SL1/TIF-IB complex.

Its subcellular location is the nucleus. It is found in the nucleolus. The protein localises to the chromosome. It carries out the reaction RNA(n) + a ribonucleoside 5'-triphosphate = RNA(n+1) + diphosphate. Functionally, catalytic core component of RNA polymerase I (Pol I), a DNA-dependent RNA polymerase which synthesizes ribosomal RNA precursors using the four ribonucleoside triphosphates as substrates. Transcribes 47S pre-rRNAs from multicopy rRNA gene clusters, giving rise to 5.8S, 18S and 28S ribosomal RNAs. Pol I-mediated transcription cycle proceeds through transcription initiation, transcription elongation and transcription termination stages. During transcription initiation, Pol I pre-initiation complex (PIC) is recruited by the selectivity factor 1 (SL1/TIF-IB) complex bound to the core promoter that precedes an rDNA repeat unit. The PIC assembly bends the promoter favoring the formation of the transcription bubble and promoter escape. Once the polymerase has escaped from the promoter it enters the elongation phase during which RNA is actively polymerized, based on complementarity with the template DNA strand. Highly processive, assembles in structures referred to as 'Miller trees' where many elongating Pol I complexes queue and transcribe the same rDNA coding regions. At terminator sequences downstream of the rDNA gene, PTRF interacts with Pol I and halts Pol I transcription leading to the release of the RNA transcript and polymerase from the DNA. Forms Pol I active center together with the largest subunit POLR1A/RPA1. Appends one nucleotide at a time to the 3' end of the nascent RNA, with POLR1A/RPA1 contributing a Mg(2+)-coordinating DxDGD motif, and POLR1B/RPA2 providing lysine residues believed to facilitate Watson-Crick base pairing between the incoming nucleotide and the template base. Typically, Mg(2+) ions direct a 5' nucleoside triphosphate to form a phosphodiester bond with the 3' hydroxyl of the preceding nucleotide of the nascent RNA, with the elimination of pyrophosphate. Has proofreading activity: Pauses and backtracks to allow the cleavage of a missincorporated nucleotide via POLR1H/RPA12. High Pol I processivity is associated with decreased transcription fidelity. The chain is DNA-directed RNA polymerase I subunit RPA2 (POLR1B) from Pongo abelii (Sumatran orangutan).